The following is a 1392-amino-acid chain: DNA-directed RNA polymerase subunit beta'' (1392 aa).

Residues Cys224, Cys295, Cys302, and Cys305 each contribute to the Zn(2+) site.

Belongs to the RNA polymerase beta' chain family. RpoC2 subfamily. In terms of assembly, in plastids the minimal PEP RNA polymerase catalytic core is composed of four subunits: alpha, beta, beta', and beta''. When a (nuclear-encoded) sigma factor is associated with the core the holoenzyme is formed, which can initiate transcription. Zn(2+) serves as cofactor.

It localises to the plastid. It is found in the chloroplast. It carries out the reaction RNA(n) + a ribonucleoside 5'-triphosphate = RNA(n+1) + diphosphate. Its function is as follows. DNA-dependent RNA polymerase catalyzes the transcription of DNA into RNA using the four ribonucleoside triphosphates as substrates. This is DNA-directed RNA polymerase subunit beta'' from Solanum bulbocastanum (Wild potato).